The chain runs to 366 residues: MIKILADDRIPFVSELFGDFGELILKPGAHIQNRDLLAVNALLTRSITSVDSALLEGTAVEFVGSATAGFDHIDSTWLKKQSIHWAYAPGANATAVAEYVLHCVAYLHKKNLLPRKSATAAIIGVGHVGCVVSDRLRKIGFTVFHNDPPRAQLEKDFISVPLASLANVDLVCLHTPLVKTGNFPTYHLIDNRFLKMLKPGSVLLNAGRGAVIDNNALLQCDHVITCLDVWENESTVNLQLLEKTTIATPHIAGYSKQAKLRATLMIYDAFLKYFHLSDTRRFSELQQLQETMTLNIQDGRNAEDILLTLFDPGRESQRMREALAENPDQFEYLRRHFPLRNEFSAIQLTPTPSALLRKELDDWGFK.

Ser46 and Thr67 together coordinate substrate. NAD(+)-binding residues include Asp147 and Thr175. Arg208 is an active-site residue. Asp228 provides a ligand contact to NAD(+). The active site involves Glu233. His250 (proton donor) is an active-site residue. Gly253 is an NAD(+) binding site. Tyr254 serves as a coordination point for substrate.

Belongs to the D-isomer specific 2-hydroxyacid dehydrogenase family. PdxB subfamily. Homodimer.

It localises to the cytoplasm. It catalyses the reaction 4-phospho-D-erythronate + NAD(+) = (R)-3-hydroxy-2-oxo-4-phosphooxybutanoate + NADH + H(+). It functions in the pathway cofactor biosynthesis; pyridoxine 5'-phosphate biosynthesis; pyridoxine 5'-phosphate from D-erythrose 4-phosphate: step 2/5. In terms of biological role, catalyzes the oxidation of erythronate-4-phosphate to 3-hydroxy-2-oxo-4-phosphonooxybutanoate. The chain is Erythronate-4-phosphate dehydrogenase from Coxiella burnetii (strain Dugway 5J108-111).